Reading from the N-terminus, the 237-residue chain is Uridylate kinase (237 aa).

Residue 12-15 participates in ATP binding; the sequence is KLSG. The involved in allosteric activation by GTP stretch occupies residues 20 to 25; the sequence is GENGYG. A UMP-binding site is contributed by Gly-54. Gly-55 and Arg-59 together coordinate ATP. UMP is bound by residues Asp-72 and 133–140; that span reads TGNPYFST. Residues Tyr-166 and Asp-169 each coordinate ATP.

It belongs to the UMP kinase family. In terms of assembly, homohexamer.

Its subcellular location is the cytoplasm. The enzyme catalyses UMP + ATP = UDP + ADP. It functions in the pathway pyrimidine metabolism; CTP biosynthesis via de novo pathway; UDP from UMP (UMPK route): step 1/1. Allosterically activated by GTP. Inhibited by UTP. Catalyzes the reversible phosphorylation of UMP to UDP. This is Uridylate kinase from Clostridium tetani (strain Massachusetts / E88).